The primary structure comprises 483 residues: MFS-type transporter ppzB (483 aa).

5 consecutive transmembrane segments (helical) span residues F18–L38, A62–A82, M96–V116, I149–V169, and A178–I198. N219 carries N-linked (GlcNAc...) asparagine glycosylation. 6 helical membrane-spanning segments follow: residues L281–P301, F310–G330, A344–E364, V374–P394, F424–F444, and V453–V473.

It belongs to the major facilitator superfamily. TCR/Tet family.

It is found in the membrane. Functionally, MFS-type transporter; part of the gene cluster that mediates the biosynthesis of pyrrolopyrazines, secondary metabolites showing insecticidal activity. Probably involved in the secretion of peramine and other pyrrolopyrazines. This chain is MFS-type transporter ppzB, found in Metarhizium rileyi (strain RCEF 4871) (Nomuraea rileyi).